Reading from the N-terminus, the 62-residue chain is Protein YhjR (62 aa).

The sequence is that of Protein YhjR (yhjR) from Escherichia coli (strain K12).